Reading from the N-terminus, the 802-residue chain is Neuronal PAS domain-containing protein 4 (802 aa).

Residues 1–13 form a basic motif; degenerate region; the sequence is MYRSTKGASKARR. The bHLH domain maps to 1–53; that stretch reads MYRSTKGASKARRDQINAEIRNLKELLPLAEADKVRLSYLHIMSLACIYTRKG. Residues 5–38 are a coiled coil; the sequence is TKGASKARRDQINAEIRNLKELLPLAEADKVRLS. Residues 14–53 are helix-loop-helix motif; the sequence is DQINAEIRNLKELLPLAEADKVRLSYLHIMSLACIYTRKG. PAS domains follow at residues 70-144 and 203-275; these read SAQE…LDAD and PGPG…LAEN. Residues 280-319 form the PAC domain; that stretch reads AEMVVRLQAKHGGWTWIYCMLYSDGPEGPITANNYPISDT. 3 stretches are compositionally biased toward polar residues: residues 472–495, 502–518, and 527–555; these read PSSA…SSAR, TPCT…STAT, and THEQ…QLSP. The interval 472 to 555 is disordered; it reads PSSATFPDPL…SQTFPEQLSP (84 aa). Positions 624 to 648 form a coiled coil; that stretch reads YTEKEQNEIDRLIQQISQLAQGMDR.

As to quaternary structure, efficient DNA binding requires dimerization with another bHLH protein. Heterodimer; forms a heterodimer with ARNT, ARNT2 or BMAL1. Ubiquitinated, leading to degradation by the proteosome. Specifically expressed in neurons. Expressed in the lateral nucleus of the amygdala (at protein level).

It is found in the nucleus. Functionally, transcription factor expressed in neurons of the brain that regulates the excitatory-inhibitory balance within neural circuits and is required for contextual memory in the hippocampus. Plays a key role in the structural and functional plasticity of neurons. Acts as an early-response transcription factor in both excitatory and inhibitory neurons, where it induces distinct but overlapping sets of late-response genes in these two types of neurons, allowing the synapses that form on inhibitory and excitatory neurons to be modified by neuronal activity in a manner specific to their function within a circuit, thereby facilitating appropriate circuit responses to sensory experience. In excitatory neurons, activates transcription of BDNF, which in turn controls the number of GABA-releasing synapses that form on excitatory neurons, thereby promoting an increased number of inhibitory synapses on excitatory neurons. In inhibitory neurons, regulates a distinct set of target genes that serve to increase excitatory input onto somatostatin neurons, probably resulting in enhanced feedback inhibition within cortical circuits. The excitatory and inhibitory balance in neurons affects a number of processes, such as short-term and long-term memory, acquisition of experience, fear memory, response to stress and social behavior. Acts as a regulator of dendritic spine development in olfactory bulb granule cells in a sensory-experience-dependent manner by regulating expression of MDM2. Efficient DNA binding requires dimerization with another bHLH protein, such as ARNT, ARNT2 or BMAL1. Can activate the CME (CNS midline enhancer) element. The polypeptide is Neuronal PAS domain-containing protein 4 (Rattus norvegicus (Rat)).